The primary structure comprises 160 residues: MTNKAIYPGTFDPLTNGHLDLVTRAAKMFDVVVLAIAASPSKRPLFDLNERVALATQVTAHLPNVKVTGFSDLMADFARQQQANILIRGVRAMTDVDYEMPLAKMNRHLMPALETVFMLPAEAWSYISSTLVKEVALHGGDVDHFLPAPIAKEVRARLHP.

Residue T10 participates in substrate binding. ATP contacts are provided by residues 10–11 (TF) and H18. The substrate site is built by K42, M74, and R88. Residues 89–91 (GVR), E99, and 124–130 (WSYISST) contribute to the ATP site.

The protein belongs to the bacterial CoaD family. As to quaternary structure, homohexamer. Mg(2+) is required as a cofactor.

It is found in the cytoplasm. It catalyses the reaction (R)-4'-phosphopantetheine + ATP + H(+) = 3'-dephospho-CoA + diphosphate. Its pathway is cofactor biosynthesis; coenzyme A biosynthesis; CoA from (R)-pantothenate: step 4/5. Its function is as follows. Reversibly transfers an adenylyl group from ATP to 4'-phosphopantetheine, yielding dephospho-CoA (dPCoA) and pyrophosphate. The chain is Phosphopantetheine adenylyltransferase from Sodalis glossinidius (strain morsitans).